Reading from the N-terminus, the 208-residue chain is High frequency lysogenization protein HflD homolog (208 aa).

This sequence belongs to the HflD family.

It localises to the cytoplasm. Its subcellular location is the cell inner membrane. The chain is High frequency lysogenization protein HflD homolog from Pseudomonas putida (strain ATCC 700007 / DSM 6899 / JCM 31910 / BCRC 17059 / LMG 24140 / F1).